Consider the following 371-residue polypeptide: Otolith matrix protein 1 (371 aa).

A signal peptide spans 1–21 (MDLPGGHLAVVLFLFVLVSMS). One can recognise a Transferrin-like domain in the interval 27–367 (IRWCTVSDAE…YTTILRAFEC (341 aa)).

Interacts with OTOL1.

The protein resides in the secreted. Required for normal otolith growth and deposition of otolin-1 in the otolith. This chain is Otolith matrix protein 1 (otomp), found in Danio rerio (Zebrafish).